A 218-amino-acid polypeptide reads, in one-letter code: Flagellin B1 (218 aa).

The propeptide occupies 1-12 (MNIKEFLSNKKG). Asn38, Asn71, Asn77, Asn115, and Asn136 each carry an N-linked (GlcNAc...) asparagine glycan.

Belongs to the archaeal flagellin family. Post-translationally, N-linked glycans consist of the 779 Da trisaccharide beta-ManNAc(Thr)-(1-4)-beta-GlcNAc3NAcA-(1-3)-beta-GlcNAc.

The protein resides in the archaeal flagellum. Functionally, flagellin is the subunit protein which polymerizes to form the filaments of archaeal flagella. This chain is Flagellin B1 (flaB1), found in Methanococcus voltae.